Here is a 270-residue protein sequence, read N- to C-terminus: Putative pyruvate, phosphate dikinase regulatory protein (270 aa).

148–155 (GVSRTSKT) provides a ligand contact to ADP.

The protein belongs to the pyruvate, phosphate/water dikinase regulatory protein family. PDRP subfamily.

It catalyses the reaction N(tele)-phospho-L-histidyl/L-threonyl-[pyruvate, phosphate dikinase] + ADP = N(tele)-phospho-L-histidyl/O-phospho-L-threonyl-[pyruvate, phosphate dikinase] + AMP + H(+). It carries out the reaction N(tele)-phospho-L-histidyl/O-phospho-L-threonyl-[pyruvate, phosphate dikinase] + phosphate + H(+) = N(tele)-phospho-L-histidyl/L-threonyl-[pyruvate, phosphate dikinase] + diphosphate. Its function is as follows. Bifunctional serine/threonine kinase and phosphorylase involved in the regulation of the pyruvate, phosphate dikinase (PPDK) by catalyzing its phosphorylation/dephosphorylation. This is Putative pyruvate, phosphate dikinase regulatory protein from Bacillus cereus (strain B4264).